Reading from the N-terminus, the 247-residue chain is Pyridoxine 5'-phosphate synthase (247 aa).

Asparagine 12 is a 3-amino-2-oxopropyl phosphate binding site. A 1-deoxy-D-xylulose 5-phosphate-binding site is contributed by 14–15 (DH). Arginine 23 serves as a coordination point for 3-amino-2-oxopropyl phosphate. Residue histidine 48 is the Proton acceptor of the active site. 2 residues coordinate 1-deoxy-D-xylulose 5-phosphate: arginine 50 and histidine 55. Glutamate 75 functions as the Proton acceptor in the catalytic mechanism. Residue threonine 105 coordinates 1-deoxy-D-xylulose 5-phosphate. The active-site Proton donor is the histidine 196. 3-amino-2-oxopropyl phosphate is bound by residues glycine 197 and 218-219 (GH).

Belongs to the PNP synthase family. As to quaternary structure, homooctamer; tetramer of dimers.

Its subcellular location is the cytoplasm. The enzyme catalyses 3-amino-2-oxopropyl phosphate + 1-deoxy-D-xylulose 5-phosphate = pyridoxine 5'-phosphate + phosphate + 2 H2O + H(+). Its pathway is cofactor biosynthesis; pyridoxine 5'-phosphate biosynthesis; pyridoxine 5'-phosphate from D-erythrose 4-phosphate: step 5/5. Catalyzes the complicated ring closure reaction between the two acyclic compounds 1-deoxy-D-xylulose-5-phosphate (DXP) and 3-amino-2-oxopropyl phosphate (1-amino-acetone-3-phosphate or AAP) to form pyridoxine 5'-phosphate (PNP) and inorganic phosphate. This is Pyridoxine 5'-phosphate synthase from Pseudomonas fluorescens (strain SBW25).